The sequence spans 278 residues: Pantothenate synthetase (278 aa).

ATP is bound at residue 26–33 (MGNLHEGH). His33 serves as the catalytic Proton donor. A (R)-pantoate-binding site is contributed by Gln57. Residue Gln57 coordinates beta-alanine. An ATP-binding site is contributed by 144–147 (GKKD). Gln150 provides a ligand contact to (R)-pantoate. Residues Gly173 and 181 to 184 (LSSR) contribute to the ATP site.

It belongs to the pantothenate synthetase family. As to quaternary structure, homodimer.

It localises to the cytoplasm. It carries out the reaction (R)-pantoate + beta-alanine + ATP = (R)-pantothenate + AMP + diphosphate + H(+). Its pathway is cofactor biosynthesis; (R)-pantothenate biosynthesis; (R)-pantothenate from (R)-pantoate and beta-alanine: step 1/1. Catalyzes the condensation of pantoate with beta-alanine in an ATP-dependent reaction via a pantoyl-adenylate intermediate. The chain is Pantothenate synthetase from Neisseria meningitidis serogroup B (strain ATCC BAA-335 / MC58).